A 310-amino-acid polypeptide reads, in one-letter code: tRNA pseudouridine synthase B (310 aa).

Catalysis depends on Asp49, which acts as the Nucleophile.

Belongs to the pseudouridine synthase TruB family. Type 1 subfamily.

The enzyme catalyses uridine(55) in tRNA = pseudouridine(55) in tRNA. Functionally, responsible for synthesis of pseudouridine from uracil-55 in the psi GC loop of transfer RNAs. In Rhizobium johnstonii (strain DSM 114642 / LMG 32736 / 3841) (Rhizobium leguminosarum bv. viciae), this protein is tRNA pseudouridine synthase B.